Consider the following 1062-residue polypeptide: Carbamoyl phosphate synthase large chain (1062 aa).

The interval 1–401 (MPKRKDIHKI…AMQKAVRSLE (401 aa)) is carboxyphosphate synthetic domain. Residues arginine 129, arginine 169, glycine 175, glycine 176, lysine 208, isoleucine 210, glutamate 215, glycine 241, isoleucine 242, histidine 243, glutamine 284, and glutamate 298 each contribute to the ATP site. Positions 133-327 (KNLCKELGEP…IAKMAAKIAV (195 aa)) constitute an ATP-grasp 1 domain. Residues glutamine 284, glutamate 298, and asparagine 300 each contribute to the Mg(2+) site. Positions 284, 298, and 300 each coordinate Mn(2+). The interval 402–546 (IDEKDLYSEE…YSTYDAENES (145 aa)) is oligomerization domain. The carbamoyl phosphate synthetic domain stretch occupies residues 547 to 929 (HRSGKKSVIV…ALYKAFAGAK (383 aa)). In terms of domain architecture, ATP-grasp 2 spans 671-861 (DDIIKELKLN…MAQVATRVIM (191 aa)). Positions 707, 746, 748, 752, 777, 778, 779, 780, 820, and 832 each coordinate ATP. Residues glutamine 820, glutamate 832, and asparagine 834 each coordinate Mg(2+). Residues glutamine 820, glutamate 832, and asparagine 834 each contribute to the Mn(2+) site. One can recognise an MGS-like domain in the interval 930-1062 (MQLPENGNVL…NRSFATDALQ (133 aa)). The interval 930–1062 (MQLPENGNVL…NRSFATDALQ (133 aa)) is allosteric domain.

The protein belongs to the CarB family. Composed of two chains; the small (or glutamine) chain promotes the hydrolysis of glutamine to ammonia, which is used by the large (or ammonia) chain to synthesize carbamoyl phosphate. Tetramer of heterodimers (alpha,beta)4. Requires Mg(2+) as cofactor. Mn(2+) serves as cofactor.

The enzyme catalyses hydrogencarbonate + L-glutamine + 2 ATP + H2O = carbamoyl phosphate + L-glutamate + 2 ADP + phosphate + 2 H(+). The catalysed reaction is hydrogencarbonate + NH4(+) + 2 ATP = carbamoyl phosphate + 2 ADP + phosphate + 2 H(+). It functions in the pathway amino-acid biosynthesis; L-arginine biosynthesis; carbamoyl phosphate from bicarbonate: step 1/1. Its pathway is pyrimidine metabolism; UMP biosynthesis via de novo pathway; (S)-dihydroorotate from bicarbonate: step 1/3. Its function is as follows. Large subunit of the glutamine-dependent carbamoyl phosphate synthetase (CPSase). CPSase catalyzes the formation of carbamoyl phosphate from the ammonia moiety of glutamine, carbonate, and phosphate donated by ATP, constituting the first step of 2 biosynthetic pathways, one leading to arginine and/or urea and the other to pyrimidine nucleotides. The large subunit (synthetase) binds the substrates ammonia (free or transferred from glutamine from the small subunit), hydrogencarbonate and ATP and carries out an ATP-coupled ligase reaction, activating hydrogencarbonate by forming carboxy phosphate which reacts with ammonia to form carbamoyl phosphate. The chain is Carbamoyl phosphate synthase large chain from Lactobacillus acidophilus (strain ATCC 700396 / NCK56 / N2 / NCFM).